The primary structure comprises 374 residues: MSAEVIKCKAAVAWEAGKPVSIEEVEVAPPKAHEVRIKIIATAVCHTDAYTLSGADPEGSFPVILGHEGAGIVESVGEGVTKLKAGDTVIPLYIPQCGECKFCLNPQTNLCQKIRTTQGKGLMPDGTSRFTCKGKTILHYMGTSTFSEYTVVADISVAKIDPLAPLDKVCLLGCGVSTGYGAAVNTAKVEPGSTCAIFGLGGVGLAVIMGCKVAGASRIIGVDINKDKFAKAKEFGASECINPQDFSKPIQEVLIEMTDGGVDYSFECIGNVKVMRAALEACHKGWGVSVVVGVAASGEEIATRPFQLVTGRTWKGTAFGGWKSVESIPKLVSEYMSKKIKVDEFVTHSLSFDQINEAFELMHAGKSIRTVVKL.

Serine 2 bears the N-acetylserine mark. Residues cysteine 45, histidine 67, cysteine 97, cysteine 100, cysteine 103, cysteine 111, and cysteine 174 each contribute to the Zn(2+) site. N6-succinyllysine is present on lysine 233. Serine 247 is subject to Phosphoserine. Lysine 315 carries the N6-succinyllysine modification. Serine 324 and serine 351 each carry phosphoserine.

This sequence belongs to the zinc-containing alcohol dehydrogenase family. Class-III subfamily. Homodimer. It depends on Zn(2+) as a cofactor.

It localises to the cytoplasm. It catalyses the reaction a primary alcohol + NAD(+) = an aldehyde + NADH + H(+). It carries out the reaction a secondary alcohol + NAD(+) = a ketone + NADH + H(+). The catalysed reaction is S-(hydroxymethyl)glutathione + NADP(+) = S-formylglutathione + NADPH + H(+). The enzyme catalyses S-(hydroxymethyl)glutathione + NAD(+) = S-formylglutathione + NADH + H(+). It catalyses the reaction 20-oxo-(5Z,8Z,11Z,14Z)-eicosatetraenoate + NAD(+) + H2O = (5Z,8Z,11Z,14Z)-eicosatetraenedioate + NADH + 2 H(+). It carries out the reaction 20-hydroxy-(5Z,8Z,11Z,14Z)-eicosatetraenoate + NAD(+) = 20-oxo-(5Z,8Z,11Z,14Z)-eicosatetraenoate + NADH + H(+). The catalysed reaction is S-nitrosoglutathione + NADH + H(+) = S-(hydroxysulfenamide)glutathione + NAD(+). In terms of biological role, catalyzes the oxidation of long-chain primary alcohols and the oxidation of S-(hydroxymethyl) glutathione. Also oxidizes long chain omega-hydroxy fatty acids, such as 20-HETE, producing both the intermediate aldehyde, 20-oxoarachidonate and the end product, a dicarboxylic acid, (5Z,8Z,11Z,14Z)-eicosatetraenedioate. Class-III ADH is remarkably ineffective in oxidizing ethanol. Required for clearance of cellular formaldehyde, a cytotoxic and carcinogenic metabolite that induces DNA damage. Also acts as a S-nitroso-glutathione reductase by catalyzing the NADH-dependent reduction of S-nitrosoglutathione, thereby regulating protein S-nitrosylation. This Equus caballus (Horse) protein is Alcohol dehydrogenase class-3.